The following is a 116-amino-acid chain: Large ribosomal subunit protein bL20 (116 aa).

It belongs to the bacterial ribosomal protein bL20 family.

Binds directly to 23S ribosomal RNA and is necessary for the in vitro assembly process of the 50S ribosomal subunit. It is not involved in the protein synthesizing functions of that subunit. The chain is Large ribosomal subunit protein bL20 (rplT) from Helicobacter pylori (strain ATCC 700392 / 26695) (Campylobacter pylori).